Here is a 550-residue protein sequence, read N- to C-terminus: Atherin (550 aa).

Over residues 1–11 the composition is skewed to pro residues; sequence MAGPPALPPPE. 2 disordered regions span residues 1–32 and 93–468; these read MAGPPALPPPETAAAATTAAAAASSSAASPHY and SYRN…KEKP. Positions 12–30 are enriched in low complexity; it reads TAAAATTAAAAASSSAASP. Positions 24–100 constitute an SAMD1-like winged helix (WH) domain; it reads SSSAASPHYQ…SISYRNAARV (77 aa). Thr108 is modified (phosphothreonine). Pro residues predominate over residues 125 to 138; sequence APPPTPAPPPPPAP. A compositionally biased stretch (low complexity) spans 139 to 160; sequence VAAAAAPARAPRAAAAAAAATA. Ser163 is subject to Phosphoserine. The segment covering 170–179 has biased composition (low complexity); sequence GPRAQRAAPL. Pro residues-rich tracts occupy residues 180–205 and 214–245; these read AAPPPAPAAPPAAAPPAGPRRAPPPA and PLPPPPQPPAPPQQQQQPPPPPPPQQPQPPPE. A compositionally biased stretch (low complexity) spans 246–257; sequence GGAARAGGPARP. Ser270 carries the post-translational modification Phosphoserine. Residues 290–300 are compositionally biased toward basic and acidic residues; sequence AAARGRLERTR. Acidic residues predominate over residues 337 to 355; that stretch reads KEEEEEEEEDDEDDDDDVV. Positions 437-448 are enriched in pro residues; it reads SPSPVPLPPGKP. Residues 474–542 form the SAM domain; sequence WTVMDVVEYF…KVLQQGHFED (69 aa).

Homopolymerize into a closed pentameric ring. Interacts (via SAM domain) with L3MBTL3 (via SAM domain); the interaction mediates L3MBTL3 binding to chromatin. Interacts (via WH domain) with KDM1A; the interaction modulates KDM1A function.

It localises to the nucleus. It is found in the chromosome. The protein resides in the secreted. Unmethylated CpG islands (CGIs)-binding protein which localizes to H3K4me3-decorated CGIs, where it acts as a transcriptional repressor. Tethers L3MBTL3 to chromatin and interacts with the KDM1A histone demethylase complex to modulate H3K4me2 and H3K4me3 levels at CGIs. Plays a role in atherogenesis by binding with LDL on cell surface and promoting LDL oxidation which leads to the formation of foam cell. The protein is Atherin (SAMD1) of Oryctolagus cuniculus (Rabbit).